A 186-amino-acid chain; its full sequence is D-glycero-beta-D-manno-heptose-1,7-bisphosphate 7-phosphatase (186 aa).

The active-site Nucleophile is D9. The Mg(2+) site is built by D9 and D11. Residues 9 to 11 (DRD), 17 to 20 (DHGY), and 51 to 54 (TNQS) contribute to the substrate site. The active-site Proton donor is D11. Residues C90, H92, C105, and C107 each contribute to the Zn(2+) site. 108–109 (RK) contacts substrate. Residues D134 and K135 each contribute to the Mg(2+) site. Residue K135 participates in substrate binding.

Belongs to the GmhB family. In terms of assembly, monomer. It depends on Mg(2+) as a cofactor. Requires Zn(2+) as cofactor.

The protein resides in the cytoplasm. It carries out the reaction D-glycero-beta-D-manno-heptose 1,7-bisphosphate + H2O = D-glycero-beta-D-manno-heptose 1-phosphate + phosphate. It functions in the pathway nucleotide-sugar biosynthesis; ADP-L-glycero-beta-D-manno-heptose biosynthesis; ADP-L-glycero-beta-D-manno-heptose from D-glycero-beta-D-manno-heptose 7-phosphate: step 2/4. Its pathway is bacterial outer membrane biogenesis; LPS core biosynthesis. Converts the D-glycero-beta-D-manno-heptose 1,7-bisphosphate intermediate into D-glycero-beta-D-manno-heptose 1-phosphate by removing the phosphate group at the C-7 position in vitro. Also catalyzes the dephosphorylation of D-glycero-alpha-D-manno-heptose-1,7-bisphosphate in vitro. This Vibrio cholerae serotype O1 (strain ATCC 39315 / El Tor Inaba N16961) protein is D-glycero-beta-D-manno-heptose-1,7-bisphosphate 7-phosphatase (gmhB).